Reading from the N-terminus, the 358-residue chain is Cytochrome c peroxidase, mitochondrial (358 aa).

Residues 1 to 38 constitute a mitochondrion transit peptide; that stretch reads MAASRTATRTLRALRTSTRPALTAAPRAAFRQGGRRLY. Catalysis depends on His-119, which acts as the Proton acceptor. Residues 192–214 are disordered; it reads PYRPGRQDRDAAGCTPDGRLPDA. A heme b-binding site is contributed by His-242. The Tryptophan radical intermediate role is filled by Trp-258.

The protein belongs to the peroxidase family. Cytochrome c peroxidase subfamily. As to quaternary structure, forms a one-to-one complex with cytochrome c. Requires heme b as cofactor.

It localises to the mitochondrion matrix. Its subcellular location is the mitochondrion intermembrane space. The catalysed reaction is 2 Fe(II)-[cytochrome c] + H2O2 + 2 H(+) = 2 Fe(III)-[cytochrome c] + 2 H2O. Destroys radicals which are normally produced within the cells and which are toxic to biological systems. The polypeptide is Cytochrome c peroxidase, mitochondrial (ccp-1) (Neurospora crassa (strain ATCC 24698 / 74-OR23-1A / CBS 708.71 / DSM 1257 / FGSC 987)).